Reading from the N-terminus, the 229-residue chain is Large ribosomal subunit protein uL1 (229 aa).

This sequence belongs to the universal ribosomal protein uL1 family. In terms of assembly, part of the 50S ribosomal subunit.

In terms of biological role, binds directly to 23S rRNA. The L1 stalk is quite mobile in the ribosome, and is involved in E site tRNA release. Functionally, protein L1 is also a translational repressor protein, it controls the translation of the L11 operon by binding to its mRNA. In Streptococcus agalactiae serotype Ia (strain ATCC 27591 / A909 / CDC SS700), this protein is Large ribosomal subunit protein uL1.